Reading from the N-terminus, the 407-residue chain is Phosphoglycerate kinase (407 aa).

Substrate contacts are provided by residues 21-23 (DLN), Arg-36, 59-62 (HQGR), Arg-116, and Arg-156. Residues Glu-332 and 358–361 (GGDT) contribute to the ATP site.

This sequence belongs to the phosphoglycerate kinase family. As to quaternary structure, monomer.

It localises to the cytoplasm. It carries out the reaction (2R)-3-phosphoglycerate + ATP = (2R)-3-phospho-glyceroyl phosphate + ADP. The protein operates within carbohydrate degradation; glycolysis; pyruvate from D-glyceraldehyde 3-phosphate: step 2/5. The protein is Phosphoglycerate kinase of Halorubrum lacusprofundi (strain ATCC 49239 / DSM 5036 / JCM 8891 / ACAM 34).